A 228-amino-acid polypeptide reads, in one-letter code: Aquaporin Z (228 aa).

The next 5 membrane-spanning stretches (helical) occupy residues 1-21 (MLNK…GGCG), 46-66 (TVLT…NPAV), 82-102 (IPYW…LYVI), 129-149 (MMAG…IILG), and 154-174 (LAPA…IHLV). The short motif at 63-65 (NPA) is the NPA 1 element. The short motif at 184–186 (NPA) is the NPA 2 element. A helical transmembrane segment spans residues 205–225 (LFWVAPLVGAVIGAIIWKGLL).

Belongs to the MIP/aquaporin (TC 1.A.8) family. As to quaternary structure, homotetramer.

It is found in the cell inner membrane. It catalyses the reaction H2O(in) = H2O(out). Channel that permits osmotically driven movement of water in both directions. It is involved in the osmoregulation and in the maintenance of cell turgor during volume expansion in rapidly growing cells. It mediates rapid entry or exit of water in response to abrupt changes in osmolarity. This Brucella suis biovar 1 (strain 1330) protein is Aquaporin Z.